A 258-amino-acid chain; its full sequence is Triosephosphate isomerase (258 aa).

11–13 provides a ligand contact to substrate; it reads NWK. H101 serves as the catalytic Electrophile. E173 functions as the Proton acceptor in the catalytic mechanism. Substrate contacts are provided by residues G179, S219, and 240 to 241; that span reads GG.

It belongs to the triosephosphate isomerase family. As to quaternary structure, homodimer.

The protein localises to the cytoplasm. The catalysed reaction is D-glyceraldehyde 3-phosphate = dihydroxyacetone phosphate. It participates in carbohydrate biosynthesis; gluconeogenesis. It functions in the pathway carbohydrate degradation; glycolysis; D-glyceraldehyde 3-phosphate from glycerone phosphate: step 1/1. Functionally, involved in the gluconeogenesis. Catalyzes stereospecifically the conversion of dihydroxyacetone phosphate (DHAP) to D-glyceraldehyde-3-phosphate (G3P). The sequence is that of Triosephosphate isomerase from Streptomyces coelicolor (strain ATCC BAA-471 / A3(2) / M145).